We begin with the raw amino-acid sequence, 229 residues long: 2-C-methyl-D-erythritol 4-phosphate cytidylyltransferase (229 aa).

It belongs to the IspD/TarI cytidylyltransferase family. IspD subfamily.

It carries out the reaction 2-C-methyl-D-erythritol 4-phosphate + CTP + H(+) = 4-CDP-2-C-methyl-D-erythritol + diphosphate. Its pathway is isoprenoid biosynthesis; isopentenyl diphosphate biosynthesis via DXP pathway; isopentenyl diphosphate from 1-deoxy-D-xylulose 5-phosphate: step 2/6. Its function is as follows. Catalyzes the formation of 4-diphosphocytidyl-2-C-methyl-D-erythritol from CTP and 2-C-methyl-D-erythritol 4-phosphate (MEP). The chain is 2-C-methyl-D-erythritol 4-phosphate cytidylyltransferase from Neisseria meningitidis serogroup A / serotype 4A (strain DSM 15465 / Z2491).